The chain runs to 631 residues: BTB/POZ domain-containing protein At1g67900 (631 aa).

Residues 28-93 form the BTB domain; it reads SDFTIEVSGS…CYGITITISA (66 aa). An NPH3 domain is found at 200 to 509; the sequence is GWWAEDIAEL…VQVLFYEQAR (310 aa). Residues 361–399 are disordered; the sequence is QTSPPTSPLRGKKGMMDRRRRSRSAENIDLEFQESRRSS. A compositionally biased stretch (basic residues) spans 370 to 382; that stretch reads RGKKGMMDRRRRS. Tyr-450 carries the phosphotyrosine modification. Residue Ser-567 is modified to Phosphoserine.

The protein belongs to the NPH3 family.

It participates in protein modification; protein ubiquitination. Its function is as follows. May act as a substrate-specific adapter of an E3 ubiquitin-protein ligase complex (CUL3-RBX1-BTB) which mediates the ubiquitination and subsequent proteasomal degradation of target proteins. This chain is BTB/POZ domain-containing protein At1g67900, found in Arabidopsis thaliana (Mouse-ear cress).